The following is a 349-amino-acid chain: tRNA N6-adenosine threonylcarbamoyltransferase (349 aa).

Fe cation is bound by residues His-115 and His-119. Residues 137–141 (LASGG), Asp-170, Gly-183, and Asn-281 each bind substrate. A Fe cation-binding site is contributed by Asp-309.

It belongs to the KAE1 / TsaD family. It depends on Fe(2+) as a cofactor.

It localises to the cytoplasm. The enzyme catalyses L-threonylcarbamoyladenylate + adenosine(37) in tRNA = N(6)-L-threonylcarbamoyladenosine(37) in tRNA + AMP + H(+). Required for the formation of a threonylcarbamoyl group on adenosine at position 37 (t(6)A37) in tRNAs that read codons beginning with adenine. Is involved in the transfer of the threonylcarbamoyl moiety of threonylcarbamoyl-AMP (TC-AMP) to the N6 group of A37, together with TsaE and TsaB. TsaD likely plays a direct catalytic role in this reaction. This is tRNA N6-adenosine threonylcarbamoyltransferase from Methylobacterium nodulans (strain LMG 21967 / CNCM I-2342 / ORS 2060).